Here is a 325-residue protein sequence, read N- to C-terminus: Elongation factor P--(R)-beta-lysine ligase (325 aa).

76-78 (SPE) serves as a coordination point for substrate. ATP-binding positions include 100–102 (RNE) and asparagine 109. Tyrosine 118 provides a ligand contact to substrate. 244 to 245 (EL) contributes to the ATP binding site. Glutamate 251 lines the substrate pocket. Residue glycine 300 coordinates ATP.

This sequence belongs to the class-II aminoacyl-tRNA synthetase family. EpmA subfamily. In terms of assembly, homodimer.

It catalyses the reaction D-beta-lysine + L-lysyl-[protein] + ATP = N(6)-((3R)-3,6-diaminohexanoyl)-L-lysyl-[protein] + AMP + diphosphate + H(+). With EpmB is involved in the beta-lysylation step of the post-translational modification of translation elongation factor P (EF-P). Catalyzes the ATP-dependent activation of (R)-beta-lysine produced by EpmB, forming a lysyl-adenylate, from which the beta-lysyl moiety is then transferred to the epsilon-amino group of a conserved specific lysine residue in EF-P. This chain is Elongation factor P--(R)-beta-lysine ligase, found in Photorhabdus laumondii subsp. laumondii (strain DSM 15139 / CIP 105565 / TT01) (Photorhabdus luminescens subsp. laumondii).